Consider the following 282-residue polypeptide: 4-diphosphocytidyl-2-C-methyl-D-erythritol kinase (282 aa).

Residue Lys-13 is part of the active site. Position 96-106 (96-106 (PMGGGIGGGSS)) interacts with ATP. Asp-138 is a catalytic residue.

This sequence belongs to the GHMP kinase family. IspE subfamily.

The enzyme catalyses 4-CDP-2-C-methyl-D-erythritol + ATP = 4-CDP-2-C-methyl-D-erythritol 2-phosphate + ADP + H(+). The protein operates within isoprenoid biosynthesis; isopentenyl diphosphate biosynthesis via DXP pathway; isopentenyl diphosphate from 1-deoxy-D-xylulose 5-phosphate: step 3/6. Catalyzes the phosphorylation of the position 2 hydroxy group of 4-diphosphocytidyl-2C-methyl-D-erythritol. This chain is 4-diphosphocytidyl-2-C-methyl-D-erythritol kinase, found in Pseudomonas syringae pv. tomato (strain ATCC BAA-871 / DC3000).